A 463-amino-acid chain; its full sequence is Phosphomannomutase/phosphoglucomutase (463 aa).

Tyr-17 is an alpha-D-glucose 1-phosphate binding site. An alpha-D-mannose 1-phosphate-binding site is contributed by Tyr-17. The Non-phosphorylated intermediate role is filled by Ser-108. Residues Ser-108, Asp-242, Asp-244, and Asp-246 each coordinate Mg(2+). The residue at position 108 (Ser-108) is a Phosphoserine. Alpha-D-glucose 1-phosphate contacts are provided by residues Lys-285, His-308, 325–329 (EMSGH), and 421–425 (RASNT). Residues His-308, 325 to 329 (EMSGH), and 421 to 425 (RASNT) each bind alpha-D-mannose 1-phosphate.

Belongs to the phosphohexose mutase family. Monomer. The cofactor is Mg(2+).

It carries out the reaction alpha-D-mannose 1-phosphate = D-mannose 6-phosphate. The enzyme catalyses alpha-D-glucose 1-phosphate = alpha-D-glucose 6-phosphate. It functions in the pathway nucleotide-sugar biosynthesis; GDP-alpha-D-mannose biosynthesis; alpha-D-mannose 1-phosphate from D-fructose 6-phosphate: step 2/2. It participates in bacterial outer membrane biogenesis; lipopolysaccharide biosynthesis. Its function is as follows. Highly reversible phosphoryltransferase. The phosphomannomutase activity produces a precursor for alginate polymerization, the alginate layer causes a mucoid phenotype and provides a protective barrier against host immune defenses and antibiotics. Also involved in core lipopolysaccaride (LPS) biosynthesis due to its phosphoglucomutase activity. Essential for rhamnolipid production, an exoproduct correlated with pathogenicity. Required for biofilm production. The reaction proceeds via 2 processive phosphoryl transferase reactions; first from enzyme-phospho-Ser-108 to the substrate (generating a bisphosphorylated substrate intermediate and a dephosphorylated enzyme), a 180 degree rotation of the intermediate (probably aided by movement of domain 4), and subsequent transfer of phosphate back to the enzyme. The polypeptide is Phosphomannomutase/phosphoglucomutase (algC) (Pseudomonas aeruginosa (strain UCBPP-PA14)).